The primary structure comprises 461 residues: tRNA modification GTPase MnmE (461 aa).

Residues arginine 27, glutamate 89, and arginine 128 each contribute to the (6S)-5-formyl-5,6,7,8-tetrahydrofolate site. The region spanning 224–382 is the TrmE-type G domain; that stretch reads GLATAIVGQP…LEELINKLFF (159 aa). Asparagine 234 is a binding site for K(+). Residues 234 to 239, 253 to 259, and 278 to 281 each bind GTP; these read NVGKSS, TDVAGTT, and DTAG. Serine 238 contacts Mg(2+). The K(+) site is built by threonine 253, valine 255, and threonine 258. Threonine 259 serves as a coordination point for Mg(2+). A (6S)-5-formyl-5,6,7,8-tetrahydrofolate-binding site is contributed by lysine 461.

It belongs to the TRAFAC class TrmE-Era-EngA-EngB-Septin-like GTPase superfamily. TrmE GTPase family. Homodimer. Heterotetramer of two MnmE and two MnmG subunits. K(+) is required as a cofactor.

Its subcellular location is the cytoplasm. Exhibits a very high intrinsic GTPase hydrolysis rate. Involved in the addition of a carboxymethylaminomethyl (cmnm) group at the wobble position (U34) of certain tRNAs, forming tRNA-cmnm(5)s(2)U34. This Lactobacillus acidophilus (strain ATCC 700396 / NCK56 / N2 / NCFM) protein is tRNA modification GTPase MnmE.